A 535-amino-acid chain; its full sequence is Nuclear/nucleolar GTPase 2 (535 aa).

The segment at 1 to 42 is disordered; the sequence is MAKKKERAVNVSGKPRHSLDVNRANDKKGAGGGAGGGGGGRS. Basic and acidic residues predominate over residues 17-29; that stretch reads HSLDVNRANDKKG. A compositionally biased stretch (gly residues) spans 30–41; it reads AGGGAGGGGGGR. Positions 213–374 constitute a CP-type G domain; it reads WGELYKVIDS…LIDCPGVVYQ (162 aa). Residues 261 to 264 form a G4 region; that stretch reads NKCD. A G5 region spans residues 290-292; sequence SIN. The segment at 323–330 is G1; sequence GYPNVGKS. The G2 stretch occupies residues 349-353; that stretch reads GETKV. Residues 367-370 form a G3 region; sequence DCPG. Residues 464 to 495 are disordered; the sequence is FFVPPPQQGEDSPSETAEPVDKSDEEGVSSDR.

It belongs to the TRAFAC class YlqF/YawG GTPase family. RsgA subfamily.

Its subcellular location is the nucleus. The protein resides in the nucleolus. Its function is as follows. GTPase involved in pre-60S ribosomal subunit maturation. This is Nuclear/nucleolar GTPase 2 from Oryza sativa subsp. indica (Rice).